Reading from the N-terminus, the 164-residue chain is CASP-like protein 1C1 (164 aa).

Over 1 to 7 (MVKLTKR) the chain is Cytoplasmic. The chain crosses the membrane as a helical span at residues 8–28 (IGGLVLRLAAFGAALAALIVM). The Extracellular segment spans residues 29–51 (ITSRERASFLAISLEAKYTDMAA). Residues 52 to 72 (FKYFVIANAVVSVYSFLVLFL) traverse the membrane as a helical segment. Over 73-80 (PKESLLWK) the chain is Cytoplasmic. The chain crosses the membrane as a helical span at residues 81-101 (FVVVLDLVMTMLLTSSLSAAL). Residues 102 to 129 (AVAQVGKKGNANAGWLPICGQVPKFCDQ) are Extracellular-facing. A helical membrane pass occupies residues 130 to 150 (ITGALIAGFVALVLYVLLLLY). The Cytoplasmic portion of the chain corresponds to 151–164 (SLHAVVDPFLLQKS).

It belongs to the Casparian strip membrane proteins (CASP) family. Homodimer and heterodimers. Expressed in the stele of the root.

It is found in the cell membrane. The polypeptide is CASP-like protein 1C1 (Arabidopsis thaliana (Mouse-ear cress)).